Here is a 178-residue protein sequence, read N- to C-terminus: Cyclin-dependent kinase inhibitor 1B (178 aa).

A compositionally biased stretch (polar residues) spans 1-11 (MSNVRVSNGSP). Positions 1–31 (MSNVRVSNGSPSLERMDARQAEYPKPSACRN) are disordered. Ser10 carries the phosphoserine; by UHMK1 modification. The tract at residues 51 to 91 (DMEEASQRKWNFDFQNHKPLEGKYEWQEVEKGSLPEFYYRP) is interaction with CDK2. Residue Tyr74 is modified to Phosphotyrosine; by SRC. The tract at residues 87-178 (FYYRPPRPPK…RTEENVSDGS (92 aa)) is disordered. Position 88 is a phosphotyrosine; by ABL, LYN, SRC and JAK2 (Tyr88). Phosphotyrosine is present on Tyr89. Residues 104–113 (QESQDVSGTR) show a composition bias toward polar residues. A compositionally biased stretch (basic and acidic residues) spans 126–137 (EDTHLVDQKTDT). The Nuclear localization signal signature appears at 153–169 (KRPATDDSSPQNKRANR). The residue at position 157 (Thr157) is a Phosphothreonine; by CaMK1, PKB/AKT1, RPS6KA1, RPS6KA3 and PIM1. Thr170 is modified (phosphothreonine).

It belongs to the CDI family. Forms a ternary complex composed of CCNE1, CDK2 and CDKN1B. Interacts directly with CCNE1; the interaction is inhibited by CDK2-dependent phosphorylation. Interacts with COPS5, subunit of the COP9 signalosome complex; the interaction leads to CDKN1B degradation. Interacts with NUP50; the interaction leads to nuclear import and degradation of phosphorylated CDKN1B. Interacts with CCND1 and SNX6. Interacts (Thr-198-phosphorylated form) with 14-3-3 proteins, binds strongly YWHAQ, weakly YWHAE and YWHAH, but not YWHAB nor YWHAZ; the interaction with YWHAQ results in translocation to the cytoplasm. Interacts with AKT1 and LYN; the interactions lead to cytoplasmic mislocation, phosphorylation of CDKN1B and inhibition of cell cycle arrest. Forms a ternary complex with CCNA2 and CDK2; CDKN1B inhibits the kinase activity of CDK2 through conformational rearrangements. Interacts (unphosphorylated form) with CDK2. Forms a complex with CDK2 and SPDYA, but does not directly interact with SPDYA. Forms a ternary complex composed of cyclin D, CDK4 and CDKN1B. Interacts (phosphorylated on Tyr-88 and Tyr-89) with CDK4; the interaction is required for cyclin D and CDK4 complex assembly, induces nuclear translocation and activates the CDK4 kinase activity. Interacts with GRB2. Interacts with PIM1. Identified in a complex with SKP1, SKP2 and CKS1B. Interacts with UHMK1; the interaction leads to cytoplasmic mislocation, phosphorylation of CDKN1B and inhibition of cell cycle arrest. Also interacts with CDK1. Dephosphorylated by PPM1H, leading to CDKN1B stability. In terms of processing, phosphorylated; phosphorylation occurs on serine, threonine and tyrosine residues. Phosphorylation on Ser-10 is the major site of phosphorylation in resting cells, takes place at the G(0)-G(1) phase and leads to protein stability. Phosphorylation on other sites is greatly enhanced by mitogens, growth factors, MYC and in certain cancer cell lines. The phosphorylated form found in the cytoplasm is inactivate. Phosphorylation on Tyr-88 has no effect on binding CDK complexes. Ubiquitinated; in the cytoplasm by the KPC complex (composed of RNF123/KPC1 and UBAC1/KPC2) and, in the nucleus, by SCF(SKP2). The latter requires prior phosphorylation on Thr-187. Ubiquitinated; by a TRIM21-containing SCF(SKP2)-like complex; leads to its degradation. Post-translationally, subject to degradation in the lysosome. Interaction with SNX6 promotes lysosomal degradation.

Its subcellular location is the nucleus. It localises to the cytoplasm. It is found in the endosome. Important regulator of cell cycle progression. Inhibits the kinase activity of CDK2 bound to cyclin A, but has little inhibitory activity on CDK2 bound to SPDYA. Involved in G1 arrest. Potent inhibitor of cyclin E- and cyclin A-CDK2 complexes. Forms a complex with cyclin type D-CDK4 complexes and is involved in the assembly, stability, and modulation of CCND1-CDK4 complex activation. Acts either as an inhibitor or an activator of cyclin type D-CDK4 complexes depending on its phosphorylation state and/or stoichometry. This Neovison vison (American mink) protein is Cyclin-dependent kinase inhibitor 1B (CDKN1B).